Reading from the N-terminus, the 250-residue chain is Ribosomal RNA-processing protein 15 (250 aa).

The segment covering 1 to 27 (MGSKHRVDTKDKKRTRKNAEFGREKRN) has biased composition (basic and acidic residues). Positions 1-101 (MGSKHRVDTK…NSKHDDGSTG (101 aa)) are disordered. 2 stretches are compositionally biased toward acidic residues: residues 43–53 (MEGDEAEEDEQ) and 67–83 (EQSD…EDDD). Serine 69 carries the post-translational modification Phosphoserine.

This sequence belongs to the RRP15 family.

The protein localises to the nucleus. It is found in the nucleolus. In terms of biological role, constituent of pre-60S ribosomal particles. Required for large subunit rRNA maturation, in particular processing of the 27S pre-rRNA at the A3 and B1 sites to yield 5.8S and 25S rRNA. The polypeptide is Ribosomal RNA-processing protein 15 (Saccharomyces cerevisiae (strain ATCC 204508 / S288c) (Baker's yeast)).